A 266-amino-acid polypeptide reads, in one-letter code: Probable carboxylesterase Os04g0669500 (266 aa).

Catalysis depends on charge relay system residues Ser154, Asp208, and His240.

The protein belongs to the AB hydrolase superfamily. AB hydrolase 2 family.

Possesses carboxylesterase activity in vitro. This chain is Probable carboxylesterase Os04g0669500, found in Oryza sativa subsp. japonica (Rice).